A 2254-amino-acid polypeptide reads, in one-letter code: Genome polyprotein (2254 aa).

Residues 438–592 (QTTINELAQL…EQWLVDNPGR (155 aa)) enclose the SF3 helicase domain. Residue 464 to 471 (GPPGIGKT) coordinates ATP. O-(5'-phospho-RNA)-tyrosine is present on Y956. The region spanning 1041–1196 (GDTYDSEGRG…KKLVSRVQTK (156 aa)) is the Peptidase C24 domain. Active-site for 3CLpro activity residues include H1078, D1099, and C1163. The RdRp catalytic domain maps to 1434–1559 (RVLYCLDYSK…GLTPATASIM (126 aa)). A disordered region spans residues 1714 to 1742 (PAPTRSVASNPEGTQNSNESRPVQPAGPM). The span at 1719–1734 (SVASNPEGTQNSNESR) shows a compositional bias: polar residues.

Homodimer. Homomultimer. In terms of assembly, interacts with host IEF4E; this interaction plays a role in translation of viral proteins. Specific enzymatic cleavages in vivo yield mature proteins. Pro-Pol is first autocatalytically cleaved, then processes the whole polyprotein. Post-translationally, VPg is uridylylated by the polymerase and is covalently attached to the 5'-end of the polyadenylated genomic and subgenomic RNAs. This uridylylated form acts as a nucleotide-peptide primer for the polymerase.

It localises to the virion. It is found in the host cytoplasm. The enzyme catalyses a ribonucleoside 5'-triphosphate + H2O = a ribonucleoside 5'-diphosphate + phosphate + H(+). The catalysed reaction is RNA(n) + a ribonucleoside 5'-triphosphate = RNA(n+1) + diphosphate. It carries out the reaction Endopeptidase with a preference for cleavage when the P1 position is occupied by Glu-|-Xaa and the P1' position is occupied by Gly-|-Yaa.. Functionally, together with NTPase and NS4, initiates the formation of the replication complex. Induces the proliferation of the host smooth ER membranes forming long tubular structures. These remodeled membranes probably form the viral factories that contain the replication complex. Displays NTPase activity, but no helicase activity. Induces the formation of convoluted membranes derived from the host ER. These remodeled membranes probably form the viral factories that contain the replication complex. Together with NS2 and NS4, initiates the formation of the replication complex. Its function is as follows. Probable key protein responsible for the formation of membrane alterations by the virus. Induces the formation of convoluted membranes derived from the host ER. These remodeled membranes probably form the viral factories that contain the replication complex. Together with NS2 and NTPase, initiates the formation of the replication complex. In terms of biological role, viral genome-linked protein is covalently linked to the 5'-end of the positive-strand, negative-strand genomic RNAs and subgenomic RNA. Acts as a genome-linked replication primer. May recruit ribosome to viral RNA thereby promoting viral proteins translation. Interacts with host translation initiation complex to allow the translation of viral proteins. Functionally, protease-polymerase p76 processes the polyprotein: Pro-Pol is first released by autocleavage, then all other proteins are cleaved. Cleaves host translation initiation factor eIF4G1, eIF4G2 and PABP1 thereby inducing a shutdown of host protein synthesis. This shutdown may not prevent viral mRNA from being translated since viral Vpg replaces the cap. It is also an RNA-directed RNA polymerase which replicates genomic and antigenomic viral RNA by recognizing specific signals. Also transcribes a subgenomic mRNA by initiating RNA synthesis internally on antigenomic RNA. This sgRNA codes for structural proteins. Catalyzes the covalent attachment VPg with viral RNAs. Capsid protein self assembles to form an icosahedral capsid with a T=3 symmetry, about 38 nm in diameter, and consisting of 180 capsid proteins. The capsid encapsulate the genomic RNA and VP2 proteins. Attaches virion to target cells, inducing endocytosis of the viral particle. Acidification of the endosome induces conformational change of capsid protein thereby injecting virus genomic RNA into host cytoplasm. In Porcine enteric sapovirus (isolate Swine/United States/Cowden/1980) (Sw/SV/Cowden/1980/US), this protein is Genome polyprotein.